The chain runs to 305 residues: Oxygen-dependent coproporphyrinogen-III oxidase (305 aa).

Ser92 contributes to the substrate binding site. Residues His96 and His106 each contribute to the a divalent metal cation site. His106 acts as the Proton donor in catalysis. 108–110 (NVR) contributes to the substrate binding site. His145 and His175 together coordinate a divalent metal cation. The important for dimerization stretch occupies residues 239–274 (YVEFNLLFDRGTLFGLQSGGRAESILISLPPLVRWE). 257-259 (GGR) lines the substrate pocket.

The protein belongs to the aerobic coproporphyrinogen-III oxidase family. Homodimer. A divalent metal cation serves as cofactor.

The protein resides in the cytoplasm. It catalyses the reaction coproporphyrinogen III + O2 + 2 H(+) = protoporphyrinogen IX + 2 CO2 + 2 H2O. It functions in the pathway porphyrin-containing compound metabolism; protoporphyrin-IX biosynthesis; protoporphyrinogen-IX from coproporphyrinogen-III (O2 route): step 1/1. In terms of biological role, involved in the heme biosynthesis. Catalyzes the aerobic oxidative decarboxylation of propionate groups of rings A and B of coproporphyrinogen-III to yield the vinyl groups in protoporphyrinogen-IX. The sequence is that of Oxygen-dependent coproporphyrinogen-III oxidase from Xylella fastidiosa (strain M12).